Here is a 158-residue protein sequence, read N- to C-terminus: Cytochrome b6-f complex subunit 4 (158 aa).

3 consecutive transmembrane segments (helical) span residues 34 to 54 (LLYI…GLAV), 93 to 113 (LLGV…PFLE), and 129 to 149 (TVFL…TLPI).

It belongs to the cytochrome b family. PetD subfamily. The 4 large subunits of the cytochrome b6-f complex are cytochrome b6, subunit IV (17 kDa polypeptide, petD), cytochrome f and the Rieske protein, while the 4 small subunits are petG, petL, petM and petN. The complex functions as a dimer.

It localises to the plastid. The protein localises to the chloroplast thylakoid membrane. Functionally, component of the cytochrome b6-f complex, which mediates electron transfer between photosystem II (PSII) and photosystem I (PSI), cyclic electron flow around PSI, and state transitions. The protein is Cytochrome b6-f complex subunit 4 of Liriodendron tulipifera (Tuliptree).